The chain runs to 194 residues: Fe/S biogenesis protein NfuA (194 aa).

[4Fe-4S] cluster contacts are provided by C152 and C155.

Belongs to the NfuA family. In terms of assembly, homodimer. Requires [4Fe-4S] cluster as cofactor.

Functionally, involved in iron-sulfur cluster biogenesis. Binds a 4Fe-4S cluster, can transfer this cluster to apoproteins, and thereby intervenes in the maturation of Fe/S proteins. Could also act as a scaffold/chaperone for damaged Fe/S proteins. In Pseudomonas entomophila (strain L48), this protein is Fe/S biogenesis protein NfuA.